The following is a 193-amino-acid chain: CASP-like protein 2U1 (193 aa).

Over 1-18 (MAMALALGGGQDAERKVK) the chain is Cytoplasmic. Residues 19–39 (VAEVALRALLCGLGALAAALV) form a helical membrane-spanning segment. Residues 40 to 61 (ATDTQTRTFFSLQKKASYTDMK) are Extracellular-facing. Residues 62-82 (AMVFLVDAAAVAAGYSLLQLA) form a helical membrane-spanning segment. Residues 83–113 (ARCCGGGAMSSGRGDGGGRGRALSWCVFSCD) lie on the Cytoplasmic side of the membrane. A helical membrane pass occupies residues 114 to 134 (QALAYVLLAAVAAALQASVVA). At 135–156 (KRGQPELQWMGICALYGAFCRQ) the chain is on the extracellular side. A helical membrane pass occupies residues 157 to 177 (AGAGLATAVVAGLAAVLLAFL). The Cytoplasmic segment spans residues 178-193 (SAFNLFRLYGSGGTKS).

Belongs to the Casparian strip membrane proteins (CASP) family. Homodimer and heterodimers.

It is found in the cell membrane. The polypeptide is CASP-like protein 2U1 (Sorghum bicolor (Sorghum)).